The sequence spans 153 residues: Large ribosomal subunit protein uL23m (153 aa).

The segment at 131 to 153 is disordered; that stretch reads MADEQQRQGSDPQRGGVPNWFSL.

Belongs to the universal ribosomal protein uL23 family. As to quaternary structure, component of the mitochondrial ribosome large subunit (39S) which comprises a 16S rRNA and about 50 distinct proteins.

Its subcellular location is the mitochondrion. The protein is Large ribosomal subunit protein uL23m (MRPL23) of Otolemur garnettii (Small-eared galago).